We begin with the raw amino-acid sequence, 700 residues long: Sex comb on midleg-like protein 2 (700 aa).

The tract at residues 1 to 33 (MGQTVNEDSMDVKKENQEKTPQSSTSSVQRDDF) is disordered. Residues 19–28 (KTPQSSTSSV) show a composition bias toward polar residues. MBT repeat units follow at residues 33–131 (FHWE…LQPP) and 139–240 (SSWP…LQPP). A compositionally biased stretch (polar residues) spans 253–281 (TESSPSEASQHSMQSPQKTTLILPTQQVR). Disordered stretches follow at residues 253–320 (TESS…EKPL) and 466–550 (PFSS…SSLN). S256, S261, S267, S299, and S300 each carry phosphoserine. T305 bears the Phosphothreonine mark. Basic and acidic residues predominate over residues 476–495 (SSAEHDKNQSAKEDVTERQS). S499 is subject to Phosphoserine. T503 bears the Phosphothreonine mark. Residue S511 is modified to Phosphoserine. A Glycyl lysine isopeptide (Lys-Gly) (interchain with G-Cter in SUMO2) cross-link involves residue K518. S522 is modified (phosphoserine). Residues 535–545 (PKEENLSEDSK) are compositionally biased toward basic and acidic residues. Residue K536 forms a Glycyl lysine isopeptide (Lys-Gly) (interchain with G-Cter in SUMO2) linkage. Residues S570, S583, S590, and S594 each carry the phosphoserine modification. Residues 575–584 (RSVPGTTSSP) show a composition bias toward polar residues. The segment at 575–594 (RSVPGTTSSPLVGDISPKSS) is disordered. Residues K599 and K605 each participate in a glycyl lysine isopeptide (Lys-Gly) (interchain with G-Cter in SUMO2) cross-link. The SAM domain maps to 631 to 700 (WSVDEVIQFM…IEKLKEGKYS (70 aa)).

It belongs to the SCM family. Highly expressed in placenta, thymus and testis. Detected at lower levels in brain, liver, skeletal muscle, pancreas and ovary.

It localises to the nucleus. Functionally, putative Polycomb group (PcG) protein. PcG proteins act by forming multiprotein complexes, which are required to maintain the transcriptionally repressive state of homeotic genes throughout development. This chain is Sex comb on midleg-like protein 2 (SCML2), found in Homo sapiens (Human).